The primary structure comprises 899 residues: MDNCYDPGLDGIPEYDDFEFSPSIVEPKDPAPETADGPYLVIVEQPKQRGFRFRYGCEGPSHGGLPGASSEKGRKTYPTVKICNYEGPAKIEVDLVTHSDPPRAHAHSLVGKQCSELGVCAVSVGPKDMTAQFNNLGVLHVTKKNMMEIMIQKLQRQRLRSKPQGLTEAERRELEQEAKELKKVMDLSIVRLRFSAFLRASDGSFSLPLKPVISQPIHDSKSPGASNLKISRMDKTAGSVRGGDEVYLLCDKVQKDDIEVRFYEDDENGWQAFGDFSPTDVHKQYAIVFRTPPYHKMKIERPVTVFLQLKRKRGGDVSDSKQFTYYPLVEDKEEVQRKRRKALPTFSQPFGGGSHMGGGSGGSAGGYGGAGGGGSLGFFSSSLAYNPYQSGAAPMGCYPGGGGGAQMAGSRRDTDAGEGAEEPRTPPEAPQGEPQALDTLQRAREYNARLFGLAQRSARALLDYGVTADARALLAGQRHLLMAQDENGDTPLHLAIIHGQTGVIEQIAHVIYHAQYLGVINLTNHLHQTPLHLAVITGQTRVVSFLLQVGADPTLLDRHGDSALHLALRAGAAAPELLQALLRSGAHAVPQILHMPDFEGLYPVHLAVHARSPECLDLLVDCGAEVEAPERQGGRTALHLATEMEELGLVTHLVTKLHANVNARTFAGNTPLHLAAGLGSPTLTRLLLKAGADIHAENEEPLCPLPSPSTSGSDSDSEGPERDTQRNFRGHTPLDLTCSTKVKTLLLNAAQNTTEPPLAPPSPAGPGLSLGDAALQNLEQLLDGPEAQGSWAELAERLGLRSLVDTYRKTPSPSGSLLRSYKLAGGDLVGLLEALSDMGLHEGVRLLKGPETRDKLPSTEVKEDSAYGSQSVEQEAEKLCPPPEPPGGLCHGHPQPQVH.

Phosphoserine occurs at positions 23 and 161. The RHD domain occupies 35–224; sequence ADGPYLVIVE…QPIHDSKSPG (190 aa). The Nuclear localization signal signature appears at 337–341; the sequence is RKRRK. A GRR region spans residues 346–377; it reads FSQPFGGGSHMGGGSGGSAGGYGGAGGGGSLG. The interval 403 to 434 is disordered; it reads GGAQMAGSRRDTDAGEGAEEPRTPPEAPQGEP. The span at 410-425 shows a compositional bias: basic and acidic residues; sequence SRRDTDAGEGAEEPRT. A Phosphothreonine modification is found at threonine 425. ANK repeat units follow at residues 487-516, 526-555, 559-590, 599-628, 633-663, and 667-696; these read NGDT…HAQY, LHQT…DPTL, HGDS…HAVP, EGLY…EVEA, GGRT…NVNA, and AGNT…DIHA. The interval 698-734 is disordered; it reads NEEPLCPLPSPSTSGSDSDSEGPERDTQRNFRGHTPL. Serine 713, serine 715, and serine 717 each carry phosphoserine. Residues 729–755 form an ANK 7 repeat; that stretch reads RGHTPLDLTCSTKVKTLLLNAAQNTTE. The Death domain maps to 764–851; the sequence is AGPGLSLGDA…EGVRLLKGPE (88 aa). Position 812 is a phosphoserine (serine 812). The segment covering 851–865 has biased composition (basic and acidic residues); sequence ETRDKLPSTEVKEDS. Positions 851–899 are disordered; sequence ETRDKLPSTEVKEDSAYGSQSVEQEAEKLCPPPEPPGGLCHGHPQPQVH. Residue lysine 855 forms a Glycyl lysine isopeptide (Lys-Gly) (interchain with G-Cter in ubiquitin) linkage. Phosphoserine; by MAP3K14 occurs at positions 865 and 869. Residues 887–899 are compositionally biased toward low complexity; that stretch reads GGLCHGHPQPQVH.

As to quaternary structure, component of the NF-kappa-B RelB-p52 complex. Homodimer; component of the NF-kappa-B p52-p52 complex. Component of the NF-kappa-B p65-p52 complex. Component of the NF-kappa-B p52-c-Rel complex. NFKB2/p52 interacts with NFKBIE. Component of a complex consisting of the NF-kappa-B p50-p50 homodimer and BCL3. Directly interacts with MEN1. While translation occurs, the particular unfolded structure after the GRR repeat promotes the generation of p52 making it an acceptable substrate for the proteasome. This process is known as cotranslational processing. The processed form is active and the unprocessed form acts as an inhibitor (I kappa B-like), being able to form cytosolic complexes with NF-kappa B, trapping it in the cytoplasm. Complete folding of the region downstream of the GRR repeat precludes processing. Post-translationally, subsequent to MAP3K14-dependent serine phosphorylation, p100 polyubiquitination occurs then triggering its proteasome-dependent processing. In terms of processing, constitutive processing is tightly suppressed by its C-terminal processing inhibitory domain, named PID, which contains the death domain. Ubiquitinated by TRIM55; leading to processing by VCP and subsequent ubiquitin-dependent protein degradation by the proteasome. Highly expressed in lymph nodes and thymus.

The protein resides in the nucleus. It localises to the cytoplasm. In terms of biological role, NF-kappa-B is a pleiotropic transcription factor present in almost all cell types and is the endpoint of a series of signal transduction events that are initiated by a vast array of stimuli related to many biological processes such as inflammation, immunity, differentiation, cell growth, tumorigenesis and apoptosis. NF-kappa-B is a homo- or heterodimeric complex formed by the Rel-like domain-containing proteins RELA/p65, RELB, NFKB1/p105, NFKB1/p50, REL and NFKB2/p52. The dimers bind at kappa-B sites in the DNA of their target genes and the individual dimers have distinct preferences for different kappa-B sites that they can bind with distinguishable affinity and specificity. Different dimer combinations act as transcriptional activators or repressors, respectively. NF-kappa-B is controlled by various mechanisms of post-translational modification and subcellular compartmentalization as well as by interactions with other cofactors or corepressors. NF-kappa-B complexes are held in the cytoplasm in an inactive state complexed with members of the NF-kappa-B inhibitor (I-kappa-B) family. In a conventional activation pathway, I-kappa-B is phosphorylated by I-kappa-B kinases (IKKs) in response to different activators, subsequently degraded thus liberating the active NF-kappa-B complex which translocates to the nucleus. In a non-canonical activation pathway, the MAP3K14-activated CHUK/IKKA homodimer phosphorylates NFKB2/p100 associated with RelB, inducing its proteolytic processing to NFKB2/p52 and the formation of NF-kappa-B RelB-p52 complexes. The NF-kappa-B heterodimeric RelB-p52 complex is a transcriptional activator. The NF-kappa-B p52-p52 homodimer is a transcriptional repressor. NFKB2 appears to have dual functions such as cytoplasmic retention of attached NF-kappa-B proteins by p100 and generation of p52 by a cotranslational processing. The proteasome-mediated process ensures the production of both p52 and p100 and preserves their independent function. p52 binds to the kappa-B consensus sequence 5'-GGRNNYYCC-3', located in the enhancer region of genes involved in immune response and acute phase reactions. p52 and p100 are respectively the minor and major form; the processing of p100 being relatively poor. Isoform p49 is a subunit of the NF-kappa-B protein complex, which stimulates the HIV enhancer in synergy with p65. In concert with RELB, regulates the circadian clock by repressing the transcriptional activator activity of the CLOCK-BMAL1 heterodimer. This is Nuclear factor NF-kappa-B p100 subunit (Nfkb2) from Mus musculus (Mouse).